A 407-amino-acid chain; its full sequence is MAQTLAAASLVLVPLVTAQQIGSIAENHPELKTYRCGSQAGCVAQSTSVVLDINAHWIHQMGAQTSCTTSSGLDPSLCPDKVTCSQNCVVEGITDYSSFGVQNSGDAITLRQYQVQNGQIKTLRPRVYLLAEDGINYSKLQLLNQEFTFDVDASKLPCGMNGALYLSEMDASGGRSALNPAGATYGTGYCDAQCFNPGPWINGEANTLGAGACCQEMDLWEANSRSTIFSPHPCTTAGLYACTGAECYSICDGYGCTYNPYELGAKDYYGYGLTVDTAKPITVVTQFVTADNTATGTLAEIRRLYVQEGMVIGNSAVAMTEAFCSSSRTFEALGGLQRMGEALGRGMVPVFSIWDDPSLWMHWLDSDGAGPCGSTEGDPAFIQANYPNTAVTFSKVRWGDIDSTYSV.

The signal sequence occupies residues 1 to 18; sequence MAQTLAAASLVLVPLVTA. The N-linked (GlcNAc...) asparagine glycan is linked to Asn136. Glu216 serves as the catalytic Nucleophile. The active-site Proton donor is Glu221.

It belongs to the glycosyl hydrolase 7 (cellulase C) family.

It localises to the secreted. It catalyses the reaction Endohydrolysis of (1-&gt;4)-beta-D-glucosidic linkages in cellulose, lichenin and cereal beta-D-glucans.. In terms of biological role, has endoglucanase activity on substrates containing beta-1,4 glycosidic bonds, like in carboxymethylcellulose (CMC), hydroxyethylcellulose (HEC) and beta-glucan. Involved in the degradation of complex natural cellulosic substrates. The protein is Probable endo-beta-1,4-glucanase celB (celB) of Aspergillus fumigatus (strain ATCC MYA-4609 / CBS 101355 / FGSC A1100 / Af293) (Neosartorya fumigata).